A 728-amino-acid polypeptide reads, in one-letter code: Phosphoribosylformylglycinamidine synthase subunit PurL (728 aa).

Histidine 42 is a catalytic residue. ATP is bound by residues tyrosine 45 and lysine 84. Residue glutamate 86 coordinates Mg(2+). Substrate is bound by residues 87 to 90 (SHNH) and arginine 109. Histidine 88 (proton acceptor) is an active-site residue. Aspartate 110 provides a ligand contact to Mg(2+). Glutamine 237 lines the substrate pocket. Residue aspartate 265 coordinates Mg(2+). Substrate is bound at residue 309-311 (ESQ). Residues aspartate 491 and glycine 528 each coordinate ATP. A Mg(2+)-binding site is contributed by asparagine 529. Serine 531 is a substrate binding site.

The protein belongs to the FGAMS family. In terms of assembly, monomer. Part of the FGAM synthase complex composed of 1 PurL, 1 PurQ and 2 PurS subunits.

Its subcellular location is the cytoplasm. It carries out the reaction N(2)-formyl-N(1)-(5-phospho-beta-D-ribosyl)glycinamide + L-glutamine + ATP + H2O = 2-formamido-N(1)-(5-O-phospho-beta-D-ribosyl)acetamidine + L-glutamate + ADP + phosphate + H(+). The protein operates within purine metabolism; IMP biosynthesis via de novo pathway; 5-amino-1-(5-phospho-D-ribosyl)imidazole from N(2)-formyl-N(1)-(5-phospho-D-ribosyl)glycinamide: step 1/2. Functionally, part of the phosphoribosylformylglycinamidine synthase complex involved in the purines biosynthetic pathway. Catalyzes the ATP-dependent conversion of formylglycinamide ribonucleotide (FGAR) and glutamine to yield formylglycinamidine ribonucleotide (FGAM) and glutamate. The FGAM synthase complex is composed of three subunits. PurQ produces an ammonia molecule by converting glutamine to glutamate. PurL transfers the ammonia molecule to FGAR to form FGAM in an ATP-dependent manner. PurS interacts with PurQ and PurL and is thought to assist in the transfer of the ammonia molecule from PurQ to PurL. The sequence is that of Phosphoribosylformylglycinamidine synthase subunit PurL from Campylobacter jejuni subsp. jejuni serotype O:2 (strain ATCC 700819 / NCTC 11168).